The chain runs to 660 residues: DNA mismatch repair protein MutL (660 aa).

The protein belongs to the DNA mismatch repair MutL/HexB family.

This protein is involved in the repair of mismatches in DNA. It is required for dam-dependent methyl-directed DNA mismatch repair. May act as a 'molecular matchmaker', a protein that promotes the formation of a stable complex between two or more DNA-binding proteins in an ATP-dependent manner without itself being part of a final effector complex. This Solibacter usitatus (strain Ellin6076) protein is DNA mismatch repair protein MutL.